Consider the following 188-residue polypeptide: Pyridoxal 5'-phosphate synthase subunit PdxT (188 aa).

47–49 lines the L-glutamine pocket; it reads GES. Catalysis depends on C79, which acts as the Nucleophile. L-glutamine-binding positions include R106 and 134-135; that span reads IR. Catalysis depends on charge relay system residues H169 and E171.

This sequence belongs to the glutaminase PdxT/SNO family. In terms of assembly, in the presence of PdxS, forms a dodecamer of heterodimers. Only shows activity in the heterodimer.

It carries out the reaction aldehydo-D-ribose 5-phosphate + D-glyceraldehyde 3-phosphate + L-glutamine = pyridoxal 5'-phosphate + L-glutamate + phosphate + 3 H2O + H(+). The enzyme catalyses L-glutamine + H2O = L-glutamate + NH4(+). It participates in cofactor biosynthesis; pyridoxal 5'-phosphate biosynthesis. Functionally, catalyzes the hydrolysis of glutamine to glutamate and ammonia as part of the biosynthesis of pyridoxal 5'-phosphate. The resulting ammonia molecule is channeled to the active site of PdxS. This is Pyridoxal 5'-phosphate synthase subunit PdxT from Caldicellulosiruptor saccharolyticus (strain ATCC 43494 / DSM 8903 / Tp8T 6331).